Here is a 626-residue protein sequence, read N- to C-terminus: Transketolase-like protein 2 (626 aa).

Thiamine diphosphate contacts are provided by residues Ser41, His78, and 124-126; that span reads GSL. Asp156 contacts Mg(2+). Thiamine diphosphate contacts are provided by Gly157 and Asn186. Asn186 and Leu188 together coordinate Mg(2+). Residues Lys248 and His262 each coordinate thiamine diphosphate. The substrate site is built by His262 and Ser349. 2 residues coordinate thiamine diphosphate: Glu370 and Phe396. The active-site Proton donor is the Glu370. His420 and Asp428 together coordinate substrate. Gln432 lines the thiamine diphosphate pocket.

The protein belongs to the transketolase family. In terms of assembly, homodimer. It depends on Mg(2+) as a cofactor. Ca(2+) serves as cofactor. Mn(2+) is required as a cofactor. The cofactor is Co(2+). Requires thiamine diphosphate as cofactor. As to expression, overexpressed in hepatoma cancer cells.

It carries out the reaction D-sedoheptulose 7-phosphate + D-glyceraldehyde 3-phosphate = aldehydo-D-ribose 5-phosphate + D-xylulose 5-phosphate. In terms of biological role, plays an essential role in total transketolase activity and cell proliferation in cancer cells; after transfection with anti-TKTL1 siRNA, total transketolase activity dramatically decreases and proliferation was significantly inhibited in cancer cells. Plays a pivotal role in carcinogenesis. The chain is Transketolase-like protein 2 (TKTL2) from Homo sapiens (Human).